The sequence spans 139 residues: Acidic phospholipase A2 DE-I (139 aa).

Positions 1–16 are cleaved as a signal peptide; it reads MRTLWIMAVLLLGVEG. 7 disulfide bridges follow: cysteine 42/cysteine 132, cysteine 44/cysteine 60, cysteine 59/cysteine 111, cysteine 65/cysteine 139, cysteine 66/cysteine 104, cysteine 73/cysteine 97, and cysteine 91/cysteine 102. Ca(2+) contacts are provided by tyrosine 43, glycine 45, and glycine 47. Histidine 63 is a catalytic residue. Ca(2+) is bound at residue aspartate 64. The active site involves aspartate 105.

The cofactor is Ca(2+). In terms of tissue distribution, expressed by the venom gland.

The protein localises to the secreted. It carries out the reaction a 1,2-diacyl-sn-glycero-3-phosphocholine + H2O = a 1-acyl-sn-glycero-3-phosphocholine + a fatty acid + H(+). Its function is as follows. Snake venom phospholipase A2 (PLA2) that inhibits the ADP- and collagen-induced human platelet aggregation. Exhibits high hydrolytic activities and preferred the anionic micelles to the zwitterionic micelles. PLA2 catalyzes the calcium-dependent hydrolysis of the 2-acyl groups in 3-sn-phosphoglycerides. This chain is Acidic phospholipase A2 DE-I, found in Ovophis okinavensis (Ryukyu Island pit viper).